Consider the following 413-residue polypeptide: Arginine biosynthesis bifunctional protein ArgJ (413 aa).

Residues Thr160, Lys186, Thr197, Glu277, Asn408, and Thr413 each contribute to the substrate site. The active-site Nucleophile is the Thr197.

This sequence belongs to the ArgJ family. Heterotetramer of two alpha and two beta chains.

It localises to the cytoplasm. It catalyses the reaction N(2)-acetyl-L-ornithine + L-glutamate = N-acetyl-L-glutamate + L-ornithine. The catalysed reaction is L-glutamate + acetyl-CoA = N-acetyl-L-glutamate + CoA + H(+). Its pathway is amino-acid biosynthesis; L-arginine biosynthesis; L-ornithine and N-acetyl-L-glutamate from L-glutamate and N(2)-acetyl-L-ornithine (cyclic): step 1/1. It participates in amino-acid biosynthesis; L-arginine biosynthesis; N(2)-acetyl-L-ornithine from L-glutamate: step 1/4. Functionally, catalyzes two activities which are involved in the cyclic version of arginine biosynthesis: the synthesis of N-acetylglutamate from glutamate and acetyl-CoA as the acetyl donor, and of ornithine by transacetylation between N(2)-acetylornithine and glutamate. This chain is Arginine biosynthesis bifunctional protein ArgJ, found in Prochlorococcus marinus (strain SARG / CCMP1375 / SS120).